We begin with the raw amino-acid sequence, 199 residues long: uncharacterized protein (199 aa).

A coiled-coil region spans residues Glu72 to Glu116. Over residues Thr98–Gly117 the composition is skewed to basic and acidic residues. Residues Thr98–Tyr127 are disordered.

This is an uncharacterized protein from Caenorhabditis elegans.